A 396-amino-acid polypeptide reads, in one-letter code: MAKGKFERTKPHVNVGTIGHVDHGKTTLTAAITTVLTKKFGGEAKAYDQIDAAPEEKARGITINTAHVEYETANRHYAHVDCPGHADYVKNMITGAAQMDGAILVCSAADGPMPQTREHILLARQVGVPYIIVFLNKCDSVDDAELLELVEMEVRELLSKYDFPGDDTPIVKGSAKLALEGDTGELGEVAIMSLADALDTYIPTPERAVDGAFLMPVEDVFSISGRGTVVTGRVERGIVKVGEEIEIVGIKPTVKTTCTGVEMFRKLLDQGQAGDNVGILLRGTKREDVERGQVLAKPGSITPHTHFTAEVYVLSKDEGGRHTPFFNNYRPQFYFRTTDVTGSIELPKDKEMVMPGDNVSITVKLIAPIAMEEGLRFAIREGGRTVGAGVVAKILD.

The tr-type G domain maps to 10 to 206; the sequence is KPHVNVGTIG…ALDTYIPTPE (197 aa). The tract at residues 19–26 is G1; the sequence is GHVDHGKT. 19–26 contacts GTP; the sequence is GHVDHGKT. Threonine 26 provides a ligand contact to Mg(2+). The interval 60–64 is G2; the sequence is GITIN. A G3 region spans residues 81–84; it reads DCPG. GTP is bound by residues 81–85 and 136–139; these read DCPGH and NKCD. The tract at residues 136–139 is G4; that stretch reads NKCD. The segment at 174–176 is G5; sequence SAK.

This sequence belongs to the TRAFAC class translation factor GTPase superfamily. Classic translation factor GTPase family. EF-Tu/EF-1A subfamily. As to quaternary structure, monomer.

Its subcellular location is the cytoplasm. It carries out the reaction GTP + H2O = GDP + phosphate + H(+). In terms of biological role, GTP hydrolase that promotes the GTP-dependent binding of aminoacyl-tRNA to the A-site of ribosomes during protein biosynthesis. The chain is Elongation factor Tu from Burkholderia cepacia (Pseudomonas cepacia).